The primary structure comprises 245 residues: Dehydrogenase/reductase SDR family member 6 (245 aa).

Residues 16–18 (QGI), Asp-37, and Asp-58 each bind NAD(+). Arg-144 serves as a coordination point for substrate. The active-site Proton acceptor is Tyr-147. NAD(+)-binding positions include Lys-151 and 180–184 (VDTPS). Arg-188 and Arg-205 together coordinate substrate.

The protein belongs to the short-chain dehydrogenases/reductases (SDR) family. Homotetramer.

The protein localises to the cytoplasm. The catalysed reaction is cis-4-hydroxy-L-proline + NAD(+) = 4-oxo-L-proline + NADH + H(+). It carries out the reaction (R)-3-hydroxybutanoate + NAD(+) = acetoacetate + NADH + H(+). The protein operates within amino-acid metabolism. It participates in siderophore biosynthesis. Its function is as follows. NAD(H)-dependent dehydrogenase/reductase with a preference for cyclic substrates. Catalyzes stereoselective conversion of 4-oxo-L-proline to cis-4-hydroxy-L-proline, likely a detoxification mechanism for ketoprolines. Mediates the formation of 2,5-dihydroxybenzoate (2,5-DHBA), a siderophore that chelates free cytoplasmic iron and associates with LCN2, thereby regulating iron transport and homeostasis while protecting cells against free radical-induced oxidative stress. The iron-siderophore complex is imported into mitochondria, providing an iron source for mitochondrial metabolic processes in particular heme synthesis. May act as a 3-hydroxybutyrate dehydrogenase. This is Dehydrogenase/reductase SDR family member 6 (BDH2) from Bos taurus (Bovine).